We begin with the raw amino-acid sequence, 186 residues long: UPF0157 protein SCO7215 (186 aa).

Belongs to the UPF0157 (GrpB) family.

The protein is UPF0157 protein SCO7215 of Streptomyces coelicolor (strain ATCC BAA-471 / A3(2) / M145).